We begin with the raw amino-acid sequence, 179 residues long: UPF0302 protein BLi02393/BL02764 (179 aa).

Belongs to the UPF0302 family.

The protein is UPF0302 protein BLi02393/BL02764 of Bacillus licheniformis (strain ATCC 14580 / DSM 13 / JCM 2505 / CCUG 7422 / NBRC 12200 / NCIMB 9375 / NCTC 10341 / NRRL NRS-1264 / Gibson 46).